The following is a 468-amino-acid chain: MPMSPDPRPGRDGASTKPTVAFAHLGCEKNRVDTEHMLGLLSEAGYGVSSDESVANVVVVNTCSFIQEAREESVRTLVGLAEQGKELIIAGCLAQHFQEELLESLPEAKAIVGTGDYQHIVEVLERVEAGERVNRVSSTPTFVADERLPRHRTTGEAVAYLKVAEGCDYRCAFCIIPHLRGNQRSRPIESIVAEAHQLAAEGVKELILISQITTNYGLDLYGRPRLADLLQALGDVEIPWIRVHYAYPTGLTNEVISAYRDVPNVLPYLDLPLQHSHPDVLRAMNRPWQADVNERLLDQIRSQLPEAVLRTTLIVGFPGETQEQFEHLAGFLERQQFDHVGVFTFSPEQGTAAAELPNPVDADIALARKDRLMTLQQPISAAANARWVGRTVDALIEQHNPETGAMIGRCARFAPEVDGEVHIAPRADGLQAAPGTMIPVQITGSDIYDLRAEIVGAASMVASARSAL.

Positions 18-129 (PTVAFAHLGC…IVEVLERVEA (112 aa)) constitute an MTTase N-terminal domain. [4Fe-4S] cluster contacts are provided by Cys27, Cys63, Cys92, Cys167, Cys171, and Cys174. The Radical SAM core domain maps to 153 to 382 (TTGEAVAYLK…MTLQQPISAA (230 aa)). The 72-residue stretch at 385 to 456 (ARWVGRTVDA…IYDLRAEIVG (72 aa)) folds into the TRAM domain.

It belongs to the methylthiotransferase family. RimO subfamily. It depends on [4Fe-4S] cluster as a cofactor.

The protein localises to the cytoplasm. It carries out the reaction L-aspartate(89)-[ribosomal protein uS12]-hydrogen + (sulfur carrier)-SH + AH2 + 2 S-adenosyl-L-methionine = 3-methylsulfanyl-L-aspartate(89)-[ribosomal protein uS12]-hydrogen + (sulfur carrier)-H + 5'-deoxyadenosine + L-methionine + A + S-adenosyl-L-homocysteine + 2 H(+). Catalyzes the methylthiolation of an aspartic acid residue of ribosomal protein uS12. The polypeptide is Ribosomal protein uS12 methylthiotransferase RimO (Synechococcus sp. (strain WH7803)).